The primary structure comprises 123 residues: Glycine cleavage system H protein (123 aa).

The Lipoyl-binding domain maps to 23-104 (HWLAGITDHA…PYDAWIFSFE (82 aa)). Lys64 is modified (N6-lipoyllysine).

It belongs to the GcvH family. As to quaternary structure, the glycine cleavage system is composed of four proteins: P, T, L and H. (R)-lipoate is required as a cofactor.

The glycine cleavage system catalyzes the degradation of glycine. The H protein shuttles the methylamine group of glycine from the P protein to the T protein. This Methylobacillus flagellatus (strain ATCC 51484 / DSM 6875 / VKM B-1610 / KT) protein is Glycine cleavage system H protein.